A 336-amino-acid chain; its full sequence is MTLPSAARVYTDVNAHKPDEYWDYENYVVDWGNQDDYQLVRKLGRGKYSEVFEAINITTTEKCVVKILKPVKKKKIKREIKILENLRGGTNIITLLAVVKDPVSRTPALIFEHVNNTDFKQLYQTLTDYEIRYYLFELLKALDYCHSMGIMHRDVKPHNVMIDHENRKLRLIDWGLAEFYHPGQEYNVRVASRYFKGPELLVDYQMYDYSLDMWSLGCMLASMIFRKEPFFHGHDNYDQLVRIAKVLGTEELYAYLDKYNIDLDPRFHDILQRHSRKRWERFVHSDNQHLVSPEALDFLDKLLRYDHVDRLTAREAMAHPYFLPIVNGQMNPNNQQ.

In terms of domain architecture, Protein kinase spans 37–322 (YQLVRKLGRG…AREAMAHPYF (286 aa)). Residues 43-51 (LGRGKYSEV) and K66 contribute to the ATP site. D154 acts as the Proton acceptor in catalysis.

Belongs to the protein kinase superfamily. Ser/Thr protein kinase family. CK2 subfamily. Tetramer of two alpha and two beta chains. Mg(2+) is required as a cofactor.

It localises to the nucleus. The protein localises to the nucleolus. The catalysed reaction is L-seryl-[protein] + ATP = O-phospho-L-seryl-[protein] + ADP + H(+). The enzyme catalyses L-threonyl-[protein] + ATP = O-phospho-L-threonyl-[protein] + ADP + H(+). Its function is as follows. Casein kinases are operationally defined by their preferential utilization of acidic proteins such as caseins as substrates. The alpha chain contains the catalytic site. May participate in Wnt signaling. This chain is Casein kinase II subunit alpha (CkIIalpha), found in Drosophila melanogaster (Fruit fly).